A 296-amino-acid polypeptide reads, in one-letter code: Ribosomal protein L11 methyltransferase (296 aa).

S-adenosyl-L-methionine contacts are provided by Thr147, Gly168, Asp190, and Asn232.

Belongs to the methyltransferase superfamily. PrmA family.

The protein localises to the cytoplasm. It carries out the reaction L-lysyl-[protein] + 3 S-adenosyl-L-methionine = N(6),N(6),N(6)-trimethyl-L-lysyl-[protein] + 3 S-adenosyl-L-homocysteine + 3 H(+). In terms of biological role, methylates ribosomal protein L11. The protein is Ribosomal protein L11 methyltransferase of Marinomonas sp. (strain MWYL1).